The primary structure comprises 264 residues: uncharacterized protein (264 aa).

ATP is bound at residue isoleucine 8 to threonine 15.

This is an uncharacterized protein from Methanocaldococcus jannaschii (strain ATCC 43067 / DSM 2661 / JAL-1 / JCM 10045 / NBRC 100440) (Methanococcus jannaschii).